Consider the following 492-residue polypeptide: N-succinylglutamate 5-semialdehyde dehydrogenase (492 aa).

220–225 (GSASTG) contributes to the NAD(+) binding site. Residues glutamate 243 and cysteine 277 contribute to the active site.

The protein belongs to the aldehyde dehydrogenase family. AstD subfamily.

The catalysed reaction is N-succinyl-L-glutamate 5-semialdehyde + NAD(+) + H2O = N-succinyl-L-glutamate + NADH + 2 H(+). It functions in the pathway amino-acid degradation; L-arginine degradation via AST pathway; L-glutamate and succinate from L-arginine: step 4/5. Catalyzes the NAD-dependent reduction of succinylglutamate semialdehyde into succinylglutamate. This is N-succinylglutamate 5-semialdehyde dehydrogenase from Salmonella heidelberg (strain SL476).